The primary structure comprises 255 residues: Proteasome subunit alpha type-3 (255 aa).

Residue S2 is modified to N-acetylserine. N6-acetyllysine is present on residues K57, K206, and K230. S243 and S250 each carry phosphoserine.

This sequence belongs to the peptidase T1A family. As to quaternary structure, the 26S proteasome consists of a 20S proteasome core and two 19S regulatory subunits. The 20S proteasome core is a barrel-shaped complex made of 28 subunits that are arranged in four stacked rings. The two outer rings are each formed by seven alpha subunits, and the two inner rings are formed by seven beta subunits. The proteolytic activity is exerted by three beta-subunits PSMB5, PSMB6 and PSMB7. Interacts with AURKB. Interacts with CDKN1A. Interacts with MDM2 and RB1. Interacts with the C-terminus of TBXA2R isoform 2. Interacts with DNAJB2.

The protein resides in the cytoplasm. Its subcellular location is the nucleus. Functionally, component of the 20S core proteasome complex involved in the proteolytic degradation of most intracellular proteins. This complex plays numerous essential roles within the cell by associating with different regulatory particles. Associated with two 19S regulatory particles, forms the 26S proteasome and thus participates in the ATP-dependent degradation of ubiquitinated proteins. The 26S proteasome plays a key role in the maintenance of protein homeostasis by removing misfolded or damaged proteins that could impair cellular functions, and by removing proteins whose functions are no longer required. Associated with the PA200 or PA28, the 20S proteasome mediates ubiquitin-independent protein degradation. This type of proteolysis is required in several pathways including spermatogenesis (20S-PA200 complex) or generation of a subset of MHC class I-presented antigenic peptides (20S-PA28 complex). Binds to the C-terminus of CDKN1A and thereby mediates its degradation. Negatively regulates the membrane trafficking of the cell-surface thromboxane A2 receptor (TBXA2R) isoform 2. The protein is Proteasome subunit alpha type-3 (PSMA3) of Bos taurus (Bovine).